The sequence spans 55 residues: Large ribosomal subunit protein bL33 (55 aa).

The protein belongs to the bacterial ribosomal protein bL33 family.

This is Large ribosomal subunit protein bL33 from Chelativorans sp. (strain BNC1).